A 158-amino-acid chain; its full sequence is Large ribosomal subunit protein uL15 (158 aa).

Residues 1 to 13 (MKLNEIKDNEGST) show a composition bias toward basic and acidic residues. The tract at residues 1 to 45 (MKLNEIKDNEGSTHSRKRLGRGIGSGSGKTGGRGVKGQKSRSGVA) is disordered. The segment covering 21 to 35 (RGIGSGSGKTGGRGV) has biased composition (gly residues).

Belongs to the universal ribosomal protein uL15 family. As to quaternary structure, part of the 50S ribosomal subunit.

Its function is as follows. Binds to the 23S rRNA. This chain is Large ribosomal subunit protein uL15, found in Rhizobium johnstonii (strain DSM 114642 / LMG 32736 / 3841) (Rhizobium leguminosarum bv. viciae).